The primary structure comprises 152 residues: Em-like protein GEA1 (152 aa).

Basic and acidic residues-rich tracts occupy residues 1–17 and 32–63; these read MASKQLSREELDEKAKQ and EAQEHLAEGRSKGGQTRKEQLGHEGYQEIGHK. Residues 1 to 63 are disordered; the sequence is MASKQLSREE…HEGYQEIGHK (63 aa). Tandem repeats lie at residues 44-63, 64-83, 84-103, and 104-123. The interval 44–123 is 4 X 20 AA tandem repeats; it reads GGQTRKEQLG…HEGYKEMGRK (80 aa). The segment at 116–152 is disordered; the sequence is GYKEMGRKGGLSTMEKSGGERAEEEGIEIDESKFTNK.

It belongs to the small hydrophilic plant seed protein family. In terms of tissue distribution, in seeds only. Specifically located to vascular bundles in the cotyledon and axis of the dry seed. Also found in the epiderm and outer layers of the cortex in the embryo axis.

It is thought to provide protection for the cytoplasm during the desiccation stage of embryo development. This Arabidopsis thaliana (Mouse-ear cress) protein is Em-like protein GEA1 (EM1).